Reading from the N-terminus, the 87-residue chain is Venom serine protease inhibitor (87 aa).

The signal sequence occupies residues 1 to 23 (MPRLVLVSFLFLAIFSVFIGGFA). Cystine bridges form between Cys27–Cys61, Cys36–Cys57, Cys40–Cys53, Cys44–Cys81, and Cys63–Cys75. One can recognise a TIL domain in the interval 27-81 (CPRNEIFTRCHAACQPSCARLARKPFCIKICKPGCICTSGYLRNKNNVCVPRSRC).

The protein belongs to the serine protease inhibitor-like (TIL domain-containing) family. As to expression, specifically expressed by the venom gland.

Its subcellular location is the secreted. In terms of biological role, antifibrinolytic and antimicrobial serine protease inhibitor. Inhibits trypsin, plasmin and microbial serine proteases but not chymotrypsin, thrombin and elastase. Inhibits the plasmin-mediated degradation of fibrin to fibrin degradation products. Also binds to bacterial and fungal surfaces and exhibits antimicrobial activity against fungi as well as Gram-positive and Gram-negative bacteria. This chain is Venom serine protease inhibitor, found in Apis cerana (Indian honeybee).